The following is a 69-amino-acid chain: Small ribosomal subunit protein bS21 (69 aa).

Residues 50-69 (KAFKRKQAKKVRKLKQKTNR) form a disordered region.

It belongs to the bacterial ribosomal protein bS21 family.

This is Small ribosomal subunit protein bS21 from Borrelia garinii subsp. bavariensis (strain ATCC BAA-2496 / DSM 23469 / PBi) (Borreliella bavariensis).